Consider the following 155-residue polypeptide: Ribonuclease H (155 aa).

An RNase H type-1 domain is found at 4–146 (NIDVVEIYTD…CDRLATEQIK (143 aa)). Mg(2+) contacts are provided by aspartate 13, glutamate 51, aspartate 73, and aspartate 138.

The protein belongs to the RNase H family. Monomer. Mg(2+) serves as cofactor.

It localises to the cytoplasm. It catalyses the reaction Endonucleolytic cleavage to 5'-phosphomonoester.. Its function is as follows. Endonuclease that specifically degrades the RNA of RNA-DNA hybrids. This Thermoanaerobacter pseudethanolicus (strain ATCC 33223 / 39E) (Clostridium thermohydrosulfuricum) protein is Ribonuclease H.